The chain runs to 346 residues: Transcription factor 19 (346 aa).

In terms of domain architecture, FHA spans 31 to 88 (YRLGCRADLCDVALRPQQEPGFISEVHAELHAERRGDDWRVSLEDHSSQGTLVNNVRL). At S78 the chain carries Phosphoserine. 2 disordered regions span residues 136-168 (PRSR…TLSP) and 190-289 (LTFS…AAGG). Basic and acidic residues predominate over residues 138-147 (SRGEEGETRA). The segment covering 190-208 (LTFSRSGSGPQNPPVSTTP) has biased composition (polar residues). Residues 250–260 (EPRKKLLRVEK) show a composition bias toward basic and acidic residues. Residues 294-343 (AAPCCCLPQEETVAWVQCDGCDTWFHVACVGCSIQAAKEADFRCPGCRVG) form a PHD-type zinc finger. The Zn(2+) site is built by C297, C299, C311, C314, H319, C322, C337, and C340.

The protein localises to the nucleus. Potential transcription factor that may play a role in the regulation of genes involved in cell cycle G1/S transition. May bind to regulatory elements of genes, including the promoter of the transcription factor FOXO1. The protein is Transcription factor 19 (TCF19) of Sus scrofa (Pig).